We begin with the raw amino-acid sequence, 401 residues long: Exodeoxyribonuclease 7 large subunit (401 aa).

It belongs to the XseA family. In terms of assembly, heterooligomer composed of large and small subunits.

It is found in the cytoplasm. The enzyme catalyses Exonucleolytic cleavage in either 5'- to 3'- or 3'- to 5'-direction to yield nucleoside 5'-phosphates.. Bidirectionally degrades single-stranded DNA into large acid-insoluble oligonucleotides, which are then degraded further into small acid-soluble oligonucleotides. The protein is Exodeoxyribonuclease 7 large subunit of Lachnoclostridium phytofermentans (strain ATCC 700394 / DSM 18823 / ISDg) (Clostridium phytofermentans).